We begin with the raw amino-acid sequence, 202 residues long: Imidazoleglycerol-phosphate dehydratase (202 aa).

It belongs to the imidazoleglycerol-phosphate dehydratase family.

The protein localises to the cytoplasm. It catalyses the reaction D-erythro-1-(imidazol-4-yl)glycerol 3-phosphate = 3-(imidazol-4-yl)-2-oxopropyl phosphate + H2O. The protein operates within amino-acid biosynthesis; L-histidine biosynthesis; L-histidine from 5-phospho-alpha-D-ribose 1-diphosphate: step 6/9. The polypeptide is Imidazoleglycerol-phosphate dehydratase (Synechococcus sp. (strain WH7803)).